The primary structure comprises 206 residues: Large ribosomal subunit protein uL4 (206 aa).

The disordered stretch occupies residues 47 to 71 (TRAQKGRSEVAGSTRKQWRQKGTGR).

Belongs to the universal ribosomal protein uL4 family. As to quaternary structure, part of the 50S ribosomal subunit.

In terms of biological role, one of the primary rRNA binding proteins, this protein initially binds near the 5'-end of the 23S rRNA. It is important during the early stages of 50S assembly. It makes multiple contacts with different domains of the 23S rRNA in the assembled 50S subunit and ribosome. Functionally, forms part of the polypeptide exit tunnel. This is Large ribosomal subunit protein uL4 from Nitrosomonas eutropha (strain DSM 101675 / C91 / Nm57).